The following is a 100-amino-acid chain: Urease subunit gamma (100 aa).

This sequence belongs to the urease gamma subunit family. Heterotrimer of UreA (gamma), UreB (beta) and UreC (alpha) subunits. Three heterotrimers associate to form the active enzyme.

Its subcellular location is the cytoplasm. The enzyme catalyses urea + 2 H2O + H(+) = hydrogencarbonate + 2 NH4(+). Its pathway is nitrogen metabolism; urea degradation; CO(2) and NH(3) from urea (urease route): step 1/1. This Ectopseudomonas mendocina (strain ymp) (Pseudomonas mendocina) protein is Urease subunit gamma.